Reading from the N-terminus, the 971-residue chain is Exportin-2 (971 aa).

One can recognise an Importin N-terminal domain in the interval 29–102 (AEKFLESVEG…KANIVNLMLT (74 aa)).

This sequence belongs to the XPO2/CSE1 family. In terms of assembly, interacts with cftr. In terms of tissue distribution, detected in larval gut, liver, exocrine pancreas and part of the brain and retina at 96 hpf.

Its subcellular location is the cytoplasm. It is found in the nucleus. The protein resides in the apical cell membrane. It localises to the basal cell membrane. The protein localises to the lateral cell membrane. In terms of biological role, export receptor for importin alpha. Mediates importin-alpha re-export from the nucleus to the cytoplasm after import substrates have been released into the nucleoplasm. Negatively regulates fluid secretion and plays a role in fluid homeostasis by down-regulating cftr activity. The sequence is that of Exportin-2 (cse1l) from Danio rerio (Zebrafish).